A 289-amino-acid chain; its full sequence is Ribonuclease H2 subunit A (289 aa).

Positions P20 to F249 constitute an RNase H type-2 domain. A divalent metal cation contacts are provided by D26, E27, and D134.

Belongs to the RNase HII family. Eukaryotic subfamily. Requires Mn(2+) as cofactor. Mg(2+) is required as a cofactor.

It catalyses the reaction Endonucleolytic cleavage to 5'-phosphomonoester.. Functionally, endonuclease that specifically degrades the RNA of RNA-DNA hybrids. Participates in DNA replication. The protein is Ribonuclease H2 subunit A (rnaseh2A) of Dictyostelium discoideum (Social amoeba).